The chain runs to 404 residues: Tryptophan synthase beta chain (404 aa).

Lysine 98 is subject to N6-(pyridoxal phosphate)lysine.

The protein belongs to the TrpB family. Tetramer of two alpha and two beta chains. It depends on pyridoxal 5'-phosphate as a cofactor.

The catalysed reaction is (1S,2R)-1-C-(indol-3-yl)glycerol 3-phosphate + L-serine = D-glyceraldehyde 3-phosphate + L-tryptophan + H2O. It functions in the pathway amino-acid biosynthesis; L-tryptophan biosynthesis; L-tryptophan from chorismate: step 5/5. In terms of biological role, the beta subunit is responsible for the synthesis of L-tryptophan from indole and L-serine. The sequence is that of Tryptophan synthase beta chain from Acidiphilium cryptum (strain JF-5).